Reading from the N-terminus, the 648-residue chain is MHLRDLTGPEQLKRLAPAELAQLAAEIRRVILETVATNGGHLAPNLGVVELTLALHIVFDSPRDKILWDVSHQSYVHKLLTGRLHQFHTLRQFGGIAGFTDPRESVHDHFHWGHASTSISAAVGMAKARDLAGDDYEVVAVIGDGALTGGMAYEALDHAGHDKTKVIVVLNDNSMSIAPNVGGISNYLARIRTGPSYQRVKHDVAEALRQIPLIGPQALELADRLKEGVKHLLVHNMFFEDLGFTYLGPVDGHNVSALVDVLRQARAYPGPTVVHVVTTKGKGVPYAEQLPDKFHGGGPFDVATGRTGPGSLTYSEVFGNVMCKLAAEDPRVCAITAAMPSGTGLSRFARQFPDRYFDVGIAEQHAVTFAAGLAKGGMRPVFAVYSTFLQRAYDQVIHDVALQNLPVTLAIDRGGLVEDGATHQGVFDVAYLRAIPNMVVMAPKDENELQHMLYTALCHDGPAALRYPRGKAQGVPLDETLQPLPIGRGEVMQEGADVALIGLGTMARVCQEAARLLAEKSISAMVINPRFVKPLDAELLLRAGREVGAVVTVEEACLAGGFGSAVLELYAAHGVNARVERMGIPDEFVDHGQPARYLERYGLTPEGVAQRAEALLLRMRSDLAAQPARRSRSVRRLSGAKAAGNGET.

Thiamine diphosphate contacts are provided by residues His72 and 113-115 (GHA). Asp144 lines the Mg(2+) pocket. Residues 145 to 146 (GA), Asn173, and Glu363 each bind thiamine diphosphate. Asn173 lines the Mg(2+) pocket.

The protein belongs to the transketolase family. DXPS subfamily. Homodimer. The cofactor is Mg(2+). It depends on thiamine diphosphate as a cofactor.

The enzyme catalyses D-glyceraldehyde 3-phosphate + pyruvate + H(+) = 1-deoxy-D-xylulose 5-phosphate + CO2. Its pathway is metabolic intermediate biosynthesis; 1-deoxy-D-xylulose 5-phosphate biosynthesis; 1-deoxy-D-xylulose 5-phosphate from D-glyceraldehyde 3-phosphate and pyruvate: step 1/1. Catalyzes the acyloin condensation reaction between C atoms 2 and 3 of pyruvate and glyceraldehyde 3-phosphate to yield 1-deoxy-D-xylulose-5-phosphate (DXP). In Symbiobacterium thermophilum (strain DSM 24528 / JCM 14929 / IAM 14863 / T), this protein is 1-deoxy-D-xylulose-5-phosphate synthase.